The primary structure comprises 1940 residues: Myosin-1B (1940 aa).

The Myosin N-terminal SH3-like domain maps to 33-82 (DAKSSVFVVHAKESYVKSTIQSKESGKVTVKTEGGETLTVKEDQIFSMNP). Residues 86-783 (DKIEDMAMMT…LLGLLEEMRD (698 aa)) enclose the Myosin motor domain. Lysine 130 bears the N6,N6,N6-trimethyllysine mark. Position 179-186 (179-186 (GESGAGKT)) interacts with ATP. Actin-binding stretches follow at residues 660–682 (LNKL…IPNE) and 762–776 (KFGH…GLLG). Residues 786 to 815 (LAQLITRTQARCRGFLMRVEFKKMMERRES) enclose the IQ domain. Positions 844–1940 (LLKSAESEKE…EIGKKAESEE (1097 aa)) form a coiled coil. Residues 1912 to 1940 (EERADIAESQVNKLRAKSREIGKKAESEE) form a disordered region. Over residues 1928–1940 (KSREIGKKAESEE) the composition is skewed to basic and acidic residues.

Belongs to the TRAFAC class myosin-kinesin ATPase superfamily. Myosin family. In terms of assembly, muscle myosin is a hexameric protein that consists of 2 heavy chain subunits (MHC), 2 alkali light chain subunits (MLC) and 2 regulatory light chain subunits (MLC-2).

Its subcellular location is the cytoplasm. It is found in the myofibril. In terms of biological role, muscle contraction. This is Myosin-1B (MYH1B) from Gallus gallus (Chicken).